A 144-amino-acid chain; its full sequence is Bombinins BLP-7/GH-2 (144 aa).

Positions methionine 1–alanine 18 are cleaved as a signal peptide. The propeptide occupies arginine 19 to arginine 43. Asparagine 70 is modified (asparagine amide). The propeptide occupies threonine 74 to arginine 123. Position 143 is an isoleucine amide (isoleucine 143).

It belongs to the bombinin family. In terms of tissue distribution, expressed by the skin glands.

Its subcellular location is the secreted. Antimicrobial peptide with activity against Gram-positive and -negative bacteria and fungi. Shows activity against P.acnes (MIC=5 uM), E.coli (MIC=5-6.3 uM), S.aureus (MIC=5-6.3 uM), M.luteus, S.cerevisiae and C.albicans (MIC=10-12.5 uM). Also reduces the production of interleukin (IL)-8 and granulocyte-macrophage colony stimulating factor (CSF2) in normal human epidermal keratinocytes (NHEKs). Shows anticancer activity against three human hepatoma cell lines. In vivo, using the rat ear edema model, suppress P.acnes-induced skin inflammation, significantly reducing the ear thickness. Shows weak hemolytic activity against human erythrocytes. Its function is as follows. Shows weak antimicrobial activity but high hemolytic activity. The protein is Bombinins BLP-7/GH-2 of Bombina orientalis (Oriental fire-bellied toad).